Consider the following 266-residue polypeptide: NAD kinase 1 (266 aa).

Asp-45 (proton acceptor) is an active-site residue. NAD(+) is bound by residues 45-46, 122-123, and Arg-148; these read DG and NE. Asp-150 is an ATP binding site. Residues Ser-158 and 161–166 contribute to the NAD(+) site; that span reads TAYNKA.

The protein belongs to the NAD kinase family. As to quaternary structure, homodimer. Ca(2+) is required as a cofactor. It depends on Mn(2+) as a cofactor.

The protein localises to the cytoplasm. It carries out the reaction NAD(+) + ATP = ADP + NADP(+) + H(+). Its activity is regulated as follows. Allosterically inhibited by NADP and activated by quinolinic acid. Strongly inhibited by HgCl(2). Functionally, involved in the regulation of the intracellular balance of NAD and NADP, and is a key enzyme in the biosynthesis of NADP. Catalyzes specifically the phosphorylation on 2'-hydroxyl of the adenosine moiety of NAD to yield NADP. It can use ATP and other nucleoside triphosphates (GTP, UTP) as well as inorganic polyphosphate (poly(P)) as a source of phosphorus. The sequence is that of NAD kinase 1 (ppnKA) from Bacillus subtilis (strain 168).